A 1612-amino-acid chain; its full sequence is DNA topoisomerase 2-beta (1612 aa).

Ala2 carries the N-acetylalanine modification. Position 3 is an N6-acetyllysine (Lys3). Glycyl lysine isopeptide (Lys-Gly) (interchain with G-Cter in SUMO2) cross-links involve residues Lys21 and Lys22. ATP contacts are provided by residues Asn100, Asn129, and 157 to 159 (SSN). Glycyl lysine isopeptide (Lys-Gly) (interchain with G-Cter in SUMO2) cross-links involve residues Lys165 and Lys166. 170–177 (GRNGYGAK) contacts ATP. Glycyl lysine isopeptide (Lys-Gly) (interchain with G-Cter in SUMO2) cross-links involve residues Lys216 and Lys287. The tract at residues 351–353 (KKK) is interaction with DNA. Glycyl lysine isopeptide (Lys-Gly) (interchain with G-Cter in SUMO2) cross-links involve residues Lys355 and Lys361. 385-387 (QTK) contacts ATP. Residues Lys425, Lys427, and Lys434 each participate in a glycyl lysine isopeptide (Lys-Gly) (interchain with G-Cter in SUMO2) cross-link. The region spanning 464–581 (CTLILTEGDS…SLLKHGFLEE (118 aa)) is the Toprim domain. 3 residues coordinate Mg(2+): Glu470, Asp550, and Asp552. Glycyl lysine isopeptide (Lys-Gly) (interchain with G-Cter in SUMO2) cross-links involve residues Lys588, Lys593, Lys623, Lys631, Lys634, Lys664, and Lys700. The Topo IIA-type catalytic domain maps to 724-1177 (IPSLVDGFKP…SPSDLWKEDL (454 aa)). The O-(5'-phospho-DNA)-tyrosine intermediate role is filled by Tyr814. The interaction with DNA stretch occupies residues 999-1008 (KLQTTLTCNS). Lys1080 is covalently cross-linked (Glycyl lysine isopeptide (Lys-Gly) (interchain with G-Cter in SUMO2)). The tract at residues 1098–1128 (AWKEAQEKAAEEEDTQNQHDDSSSDSGTPSG) is disordered. Glycyl lysine isopeptide (Lys-Gly) (interchain with G-Cter in SUMO2) cross-links involve residues Lys1202, Lys1205, Lys1214, and Lys1215. A Phosphoserine modification is found at Ser1224. Residues Lys1238, Lys1250, and Lys1259 each participate in a glycyl lysine isopeptide (Lys-Gly) (interchain with G-Cter in SUMO2) cross-link. Residues 1245–1586 (LLKKKKGDPD…FTSEPPALPR (342 aa)) are disordered. Thr1280 bears the Phosphothreonine mark. Residues Lys1311 and Lys1315 each participate in a glycyl lysine isopeptide (Lys-Gly) (interchain with G-Cter in SUMO2) cross-link. 2 stretches are compositionally biased toward basic and acidic residues: residues 1322-1332 (PWSDDESKSES) and 1346-1358 (SLLR…RPKY). Phosphoserine occurs at positions 1324, 1328, 1330, 1332, and 1346. Position 1358 is a phosphotyrosine (Tyr1358). Positions 1362–1379 (FSEEEEEDADDDDDNNDL) are enriched in acidic residues. Ser1363 is modified (phosphoserine). Lys1385 participates in a covalent cross-link: Glycyl lysine isopeptide (Lys-Gly) (interchain with G-Cter in SUMO2). Position 1387 is a phosphoserine (Ser1387). Thr1390 is subject to Phosphothreonine. At Ser1400 the chain carries Phosphoserine. Phosphotyrosine is present on Tyr1408. Position 1411 is a phosphoserine (Ser1411). Residues 1417-1429 (ATPEKSSHDKKSQ) show a composition bias toward basic and acidic residues. A Glycyl lysine isopeptide (Lys-Gly) (interchain with G-Cter in SUMO2) cross-link involves residue Lys1427. Residues Ser1428, Ser1439, and Ser1441 each carry the phosphoserine modification. Lys1443 is covalently cross-linked (Glycyl lysine isopeptide (Lys-Gly) (interchain with G-Cter in SUMO2)). Residues 1443–1453 (KSEDDSAKFDS) are compositionally biased toward basic and acidic residues. 3 positions are modified to phosphoserine: Ser1448, Ser1453, and Ser1460. Residue Lys1477 forms a Glycyl lysine isopeptide (Lys-Gly) (interchain with G-Cter in SUMO2) linkage. The interval 1493 to 1499 (KAKRAPK) is interaction with PLSCR1. Phosphoserine occurs at positions 1509, 1511, and 1513. The span at 1526–1536 (GKGRGAKKRKA) shows a compositional bias: basic residues. A phosphoserine mark is found at Ser1537 and Ser1539. The segment covering 1550 to 1561 (KPSKTASKKPKK) has biased composition (basic residues). A Phosphothreonine modification is found at Thr1562. A phosphoserine mark is found at Ser1563 and Ser1568. Residue Tyr1596 is modified to Phosphotyrosine. Ser1600 is subject to Phosphoserine.

It belongs to the type II topoisomerase family. In terms of assembly, homodimer. Interacts with PLSCR1 and KIAA1210. Requires Mg(2+) as cofactor. The cofactor is Mn(2+). Ca(2+) is required as a cofactor.

The protein localises to the nucleus. The protein resides in the nucleolus. Its subcellular location is the nucleoplasm. It carries out the reaction ATP-dependent breakage, passage and rejoining of double-stranded DNA.. In terms of biological role, key decatenating enzyme that alters DNA topology by binding to two double-stranded DNA molecules, generating a double-stranded break in one of the strands, passing the intact strand through the broken strand, and religating the broken strand. The sequence is that of DNA topoisomerase 2-beta (TOP2B) from Cricetulus longicaudatus (Long-tailed dwarf hamster).